Here is a 74-residue protein sequence, read N- to C-terminus: U6-agatoxin-Ao1a (74 aa).

The signal sequence occupies residues 1–19 (MRFYIAFFFLLLAADMALS). Positions 20-30 (FEIGNSEELER) are excised as a propeptide. Intrachain disulfides connect Cys44–Cys56, Cys49–Cys61, and Cys55–Cys72.

Expressed by the venom gland.

It is found in the secreted. The chain is U6-agatoxin-Ao1a from Agelena orientalis (Funnel-web spider).